The following is a 344-amino-acid chain: L-rhamnose-proton symporter (344 aa).

The next 10 membrane-spanning stretches (helical) occupy residues 5 to 25 (ILLG…FYAP), 38 to 58 (WAIA…YWLL), 72 to 92 (ILLP…GYGL), 101 to 121 (MGIG…TPII), 137 to 157 (TLIG…AGLL), 175 to 195 (LALA…MSAA), 214 to 234 (LPSY…FCII), 259 to 279 (ILFS…YAWG), 289 to 309 (FMSW…VGLL), and 323 to 343 (VLCI…LGMA).

It belongs to the L-rhamnose transporter (TC 2.A.7.6) family.

The protein resides in the cell inner membrane. It carries out the reaction L-rhamnopyranose(in) + H(+)(in) = L-rhamnopyranose(out) + H(+)(out). In terms of biological role, uptake of L-rhamnose across the cytoplasmic membrane with the concomitant transport of protons into the cell (symport system). In Mannheimia succiniciproducens (strain KCTC 0769BP / MBEL55E), this protein is L-rhamnose-proton symporter.